The chain runs to 234 residues: Proteasome subunit alpha type-2 (234 aa).

Ala-2 bears the N-acetylalanine mark. A Phosphotyrosine modification is found at Tyr-6. Ser-7, Ser-14, and Ser-16 each carry phosphoserine. Tyr-24 is modified (phosphotyrosine). Residue Lys-70 is modified to N6-acetyllysine. 2 positions are modified to phosphotyrosine: Tyr-76 and Tyr-121. Position 171 is an N6-acetyllysine (Lys-171).

The protein belongs to the peptidase T1A family. As to quaternary structure, the 26S proteasome consists of a 20S proteasome core and two 19S regulatory subunits. The 20S proteasome core is a barrel-shaped complex made of 28 subunits that are arranged in four stacked rings. The two outer rings are each formed by seven alpha subunits, and the two inner rings are formed by seven beta subunits. The proteolytic activity is exerted by three beta-subunits PSMB5, PSMB6 and PSMB7. Phosphorylated on tyrosine residues; which may be important for nuclear import.

It is found in the cytoplasm. Its subcellular location is the nucleus. Its function is as follows. Component of the 20S core proteasome complex involved in the proteolytic degradation of most intracellular proteins. This complex plays numerous essential roles within the cell by associating with different regulatory particles. Associated with two 19S regulatory particles, forms the 26S proteasome and thus participates in the ATP-dependent degradation of ubiquitinated proteins. The 26S proteasome plays a key role in the maintenance of protein homeostasis by removing misfolded or damaged proteins that could impair cellular functions, and by removing proteins whose functions are no longer required. Associated with the PA200 or PA28, the 20S proteasome mediates ubiquitin-independent protein degradation. This type of proteolysis is required in several pathways including spermatogenesis (20S-PA200 complex) or generation of a subset of MHC class I-presented antigenic peptides (20S-PA28 complex). The polypeptide is Proteasome subunit alpha type-2 (PSMA2) (Bos taurus (Bovine)).